The following is a 714-amino-acid chain: Fatty acid oxidation complex subunit alpha (714 aa).

The segment at 1-190 (MEMASVFTLN…KLGLVDDVVP (190 aa)) is enoyl-CoA hydratase. The 3-hydroxyacyl-CoA dehydrogenase stretch occupies residues 306–714 (APLNSVGILG…FWKTTATDLQ (409 aa)).

In the N-terminal section; belongs to the enoyl-CoA hydratase/isomerase family. It in the central section; belongs to the 3-hydroxyacyl-CoA dehydrogenase family. As to quaternary structure, heterotetramer of two alpha chains (FadJ) and two beta chains (FadI).

The protein localises to the cytoplasm. The catalysed reaction is a (3S)-3-hydroxyacyl-CoA = a (2E)-enoyl-CoA + H2O. The enzyme catalyses a 4-saturated-(3S)-3-hydroxyacyl-CoA = a (3E)-enoyl-CoA + H2O. It catalyses the reaction a (3S)-3-hydroxyacyl-CoA + NAD(+) = a 3-oxoacyl-CoA + NADH + H(+). It carries out the reaction (3S)-3-hydroxybutanoyl-CoA = (3R)-3-hydroxybutanoyl-CoA. It participates in lipid metabolism; fatty acid beta-oxidation. Its function is as follows. Catalyzes the formation of a hydroxyacyl-CoA by addition of water on enoyl-CoA. Also exhibits 3-hydroxyacyl-CoA epimerase and 3-hydroxyacyl-CoA dehydrogenase activities. This Escherichia coli (strain SE11) protein is Fatty acid oxidation complex subunit alpha.